The sequence spans 407 residues: 4-hydroxy-3-methylbut-2-en-1-yl diphosphate synthase (flavodoxin) (407 aa).

Residues Cys-296, Cys-299, Cys-342, and Glu-349 each coordinate [4Fe-4S] cluster.

This sequence belongs to the IspG family. [4Fe-4S] cluster is required as a cofactor.

It carries out the reaction (2E)-4-hydroxy-3-methylbut-2-enyl diphosphate + oxidized [flavodoxin] + H2O + 2 H(+) = 2-C-methyl-D-erythritol 2,4-cyclic diphosphate + reduced [flavodoxin]. It functions in the pathway isoprenoid biosynthesis; isopentenyl diphosphate biosynthesis via DXP pathway; isopentenyl diphosphate from 1-deoxy-D-xylulose 5-phosphate: step 5/6. Converts 2C-methyl-D-erythritol 2,4-cyclodiphosphate (ME-2,4cPP) into 1-hydroxy-2-methyl-2-(E)-butenyl 4-diphosphate. The chain is 4-hydroxy-3-methylbut-2-en-1-yl diphosphate synthase (flavodoxin) from Methylococcus capsulatus (strain ATCC 33009 / NCIMB 11132 / Bath).